Here is a 451-residue protein sequence, read N- to C-terminus: 2,4-dinitrotoluene dioxygenase system, large oxygenase component (451 aa).

A Rieske domain is found at 42 to 126 (WLFLTHDSLI…LQSVPFEKEL (85 aa)). Cys-84, His-86, Cys-104, and His-107 together coordinate [2Fe-2S] cluster. Fe cation is bound by residues His-211, His-216, and Asp-365.

Belongs to the bacterial ring-hydroxylating dioxygenase alpha subunit family. The 2,4-dinitrotoluene dioxygenase (DNTDO) multicomponent enzyme system is composed of an electron transfer component and a dioxygenase component (iron sulfur protein (ISP)). The electron transfer component is composed of a ferredoxin reductase (DntAa) and a ferredoxin (DntAb), and the dioxygenase component is formed of a large alpha subunit (DntAc) and a small beta subunit (DntAd). It depends on [2Fe-2S] cluster as a cofactor. The cofactor is Fe(2+).

The catalysed reaction is 2,4-dinitrotoluene + NADH + O2 = 4-methyl-5-nitrocatechol + nitrite + NAD(+). In terms of biological role, component of the 2,4-dinitrotoluene dioxygenase (DNTDO) multicomponent enzyme system which catalyzes the incorporation of both atoms of molecular oxygen into 2,4-dinitrotoluene (DNT) to form 4-methyl-5-nitrocatechol (MNC) and nitrite. The alpha subunit has a catalytic role in the holoenzyme. Also able to convert naphthalene to cis-(1R,2S)-dihydroxy-1,2-dihydronaphthalene. The polypeptide is 2,4-dinitrotoluene dioxygenase system, large oxygenase component (Burkholderia sp. (strain RASC)).